The sequence spans 224 residues: Heme response regulator HssR (224 aa).

The Response regulatory domain occupies 3–116 (NCLIVDDDKK…ELLFRIKAVL (114 aa)). The residue at position 52 (D52) is a 4-aspartylphosphate. The segment at residues 124–222 (DNELQLGNLI…VRGQGYRVDQ (99 aa)) is a DNA-binding region (ompR/PhoB-type).

Phosphorylated by HssS.

It localises to the cytoplasm. In terms of biological role, member of the two-component regulatory system HssS/HssR involved in intracellular heme homeostasis and tempering of staphylococcal virulence. Phosphorylated HssR binds to a direct repeat sequence within hrtAB promoter and activates the expression of hrtAB, an efflux pump, in response to extracellular heme, hemin, hemoglobin or blood. The sequence is that of Heme response regulator HssR (hssR) from Staphylococcus epidermidis (strain ATCC 12228 / FDA PCI 1200).